We begin with the raw amino-acid sequence, 553 residues long: ATP synthase F(1) complex subunit alpha, mitochondrial (553 aa).

The transit peptide at 1–43 (MLSVRVAAAVVRALPRRAGLVSRNALGSSFIAARNFHASNTHL) directs the protein to the mitochondrion. 2 positions are modified to phosphoserine: serine 53 and serine 65. Serine 76 is modified (phosphoserine; alternate). O-linked (GlcNAc) serine; alternate glycosylation occurs at serine 76. Serine 106 is subject to Phosphoserine. Residues lysine 123, lysine 126, and lysine 132 each carry the N6-acetyllysine modification. A Phosphothreonine modification is found at threonine 134. Lysine 161 bears the N6-acetyllysine; alternate mark. The residue at position 161 (lysine 161) is an N6-succinyllysine; alternate. Position 166 is a phosphoserine (serine 166). N6-acetyllysine; alternate is present on lysine 167. Position 167 is an N6-succinyllysine; alternate (lysine 167). Serine 184 carries the phosphoserine modification. Omega-N-methylarginine is present on arginine 204. The ATP site is built by glutamine 215, glycine 217, lysine 218, threonine 219, and serine 220. A Mg(2+)-binding site is contributed by threonine 219. An N6-acetyllysine; alternate mark is found at lysine 230 and lysine 239. Lysine 230 and lysine 239 each carry N6-succinyllysine; alternate. Lysine 240 carries the post-translational modification N6-acetyllysine. N6-acetyllysine; alternate occurs at positions 261 and 305. Residues lysine 261 and lysine 305 each carry the N6-succinyllysine; alternate modification. Residue aspartate 312 participates in Mg(2+) binding. The residue at position 427 (lysine 427) is an N6-acetyllysine; alternate. Lysine 427 bears the N6-succinyllysine; alternate mark. Residue lysine 434 is modified to N6-acetyllysine. The ATP site is built by glutamine 473 and glutamine 475. An N6-acetyllysine; alternate mark is found at lysine 498, lysine 506, lysine 531, and lysine 539. 4 positions are modified to N6-succinyllysine; alternate: lysine 498, lysine 506, lysine 531, and lysine 539. An N6-acetyllysine modification is found at lysine 541.

It belongs to the ATPase alpha/beta chains family. In terms of assembly, homotrimer. Component of the ATP synthase complex composed at least of ATP5F1A/subunit alpha, ATP5F1B/subunit beta, ATP5MC1/subunit c (homooctomer), MT-ATP6/subunit a, MT-ATP8/subunit 8, ATP5ME/subunit e, ATP5MF/subunit f, ATP5MG/subunit g, ATP5MK/subunit k, ATP5MJ/subunit j, ATP5F1C/subunit gamma, ATP5F1D/subunit delta, ATP5F1E/subunit epsilon, ATP5PF/subunit F6, ATP5PB/subunit b, ATP5PD/subunit d, ATP5PO/subunit OSCP. ATP synthase complex consists of a soluble F(1) head domain (subunits alpha(3) and beta(3)) - the catalytic core - and a membrane F(0) domain - the membrane proton channel (subunits c, a, 8, e, f, g, k and j). These two domains are linked by a central stalk (subunits gamma, delta, and epsilon) rotating inside the F1 region and a stationary peripheral stalk (subunits F6, b, d, and OSCP). Interacts with ATPAF2. Interacts with HRG; the interaction occurs on the surface of T-cells and alters the cell morphology when associated with concanavalin (in vitro). Interacts with PLG (angiostatin peptide); the interaction inhibits most of the angiogenic properties of angiostatin. Interacts with BLOC1S1. Interacts with BCL2L1 isoform BCL-X(L); the interaction mediates the association of BCL2L1 isoform BCL-X(L) with the mitochondrial membrane F(1)F(0) ATP synthase and enhances neurons metabolic efficiency. Interacts with CLN5 and PPT1. Interacts with S100A1; this interaction increases F1-ATPase activity. Interacts with ABCB7; this interaction allows the regulation of cellular iron homeostasis and cellular reactive oxygen species (ROS) levels in cardiomyocytes. Post-translationally, acetylated on lysine residues. BLOC1S1 is required for acetylation.

The protein localises to the mitochondrion inner membrane. The protein resides in the cell membrane. Subunit alpha, of the mitochondrial membrane ATP synthase complex (F(1)F(0) ATP synthase or Complex V) that produces ATP from ADP in the presence of a proton gradient across the membrane which is generated by electron transport complexes of the respiratory chain. ATP synthase complex consist of a soluble F(1) head domain - the catalytic core - and a membrane F(1) domain - the membrane proton channel. These two domains are linked by a central stalk rotating inside the F(1) region and a stationary peripheral stalk. During catalysis, ATP synthesis in the catalytic domain of F(1) is coupled via a rotary mechanism of the central stalk subunits to proton translocation. In vivo, can only synthesize ATP although its ATP hydrolase activity can be activated artificially in vitro. With the catalytic subunit beta (ATP5F1B), forms the catalytic core in the F(1) domain. Subunit alpha does not bear the catalytic high-affinity ATP-binding sites. In Pan troglodytes (Chimpanzee), this protein is ATP synthase F(1) complex subunit alpha, mitochondrial.